Consider the following 323-residue polypeptide: MHKYQTHWVEHSIVKILSSTGKKHIALMAGGMSAEREVSLVSSEGVSKALIELGYRVTFIDMGADIAVRLQEIKPDIVFNCLHGTYGEDGCLPGLLNIMRIPYTHSGVLSSALAFNKIHSRIWFLTNNINMAESIVVNKSDNIKNDPMKRPYVIKPLAQGSSIGVEVIFAEDDFNFADYDFPYGDQVIIEQYIKGQGRELQVAVLNGKALGALEIKLLKNRFYDYETKYTEGFADHLCPAPLPANLYEKLLIESEKIYKTMNCKGPARAEFILEEQTNKLYALEINTHPGMMPLSIVPEIAAYAGINFTNLIEEIIKTASFES.

One can recognise an ATP-grasp domain in the interval 121–317 (RIWFLTNNIN…FTNLIEEIIK (197 aa)). 147-199 (PMKRPYVIKPLAQGSSIGVEVIFAEDDFNFADYDFPYGDQVIIEQYIKGQGRE) provides a ligand contact to ATP. Mg(2+)-binding residues include glutamate 270, glutamate 284, and asparagine 286.

The protein belongs to the D-alanine--D-alanine ligase family. It depends on Mg(2+) as a cofactor. The cofactor is Mn(2+).

It is found in the cytoplasm. The enzyme catalyses 2 D-alanine + ATP = D-alanyl-D-alanine + ADP + phosphate + H(+). Its pathway is cell wall biogenesis; peptidoglycan biosynthesis. Functionally, cell wall formation. This is D-alanine--D-alanine ligase from Rickettsia peacockii (strain Rustic).